The sequence spans 777 residues: DNA repair helicase/translocase XPB-R (777 aa).

The Helicase ATP-binding domain maps to 212–416; sequence AASDGALRSG…DLFHLVGPKL (205 aa). 225–232 is an ATP binding site; the sequence is LPCGSGKT. The short motif at 369-372 is the DEVH box element; sequence DEVH. A Helicase C-terminal domain is found at 484–631; the sequence is IVKRHVAESS…GYTCSVTEFN (148 aa).

Belongs to the helicase family. RAD25/XPB subfamily.

The enzyme catalyses Couples ATP hydrolysis with the unwinding of duplex DNA by translocating in the 3'-5' direction.. The catalysed reaction is ATP + H2O = ADP + phosphate + H(+). Its function is as follows. ATP-dependent 3'-5' DNA helicase/translocase; binds dsDNA rather than ssDNA, unzipping it in a translocase rather than classical helicase activity. Involved in nucleotide excision repair (NER) of damaged DNA. XPB-R is a paralog of XBP, but is not a component of the TFIIH basal transcription factor and is dispensable for RNA polymerase II transcription. In Trypanosoma brucei brucei (strain 927/4 GUTat10.1), this protein is DNA repair helicase/translocase XPB-R.